A 162-amino-acid polypeptide reads, in one-letter code: Crossover junction endodeoxyribonuclease RuvC (162 aa).

Residues Asp-7, Glu-67, and Asp-140 contribute to the active site. Mg(2+)-binding residues include Asp-7, Glu-67, and Asp-140.

This sequence belongs to the RuvC family. Homodimer which binds Holliday junction (HJ) DNA. The HJ becomes 2-fold symmetrical on binding to RuvC with unstacked arms; it has a different conformation from HJ DNA in complex with RuvA. In the full resolvosome a probable DNA-RuvA(4)-RuvB(12)-RuvC(2) complex forms which resolves the HJ. It depends on Mg(2+) as a cofactor.

Its subcellular location is the cytoplasm. The catalysed reaction is Endonucleolytic cleavage at a junction such as a reciprocal single-stranded crossover between two homologous DNA duplexes (Holliday junction).. Functionally, the RuvA-RuvB-RuvC complex processes Holliday junction (HJ) DNA during genetic recombination and DNA repair. Endonuclease that resolves HJ intermediates. Cleaves cruciform DNA by making single-stranded nicks across the HJ at symmetrical positions within the homologous arms, yielding a 5'-phosphate and a 3'-hydroxyl group; requires a central core of homology in the junction. The consensus cleavage sequence is 5'-(A/T)TT(C/G)-3'. Cleavage occurs on the 3'-side of the TT dinucleotide at the point of strand exchange. HJ branch migration catalyzed by RuvA-RuvB allows RuvC to scan DNA until it finds its consensus sequence, where it cleaves and resolves the cruciform DNA. This Heliobacterium modesticaldum (strain ATCC 51547 / Ice1) protein is Crossover junction endodeoxyribonuclease RuvC.